A 150-amino-acid chain; its full sequence is Large ribosomal subunit protein uL11 (150 aa).

It belongs to the universal ribosomal protein uL11 family. In terms of assembly, part of the ribosomal stalk of the 50S ribosomal subunit. Interacts with L10 and the large rRNA to form the base of the stalk. L10 forms an elongated spine to which L12 dimers bind in a sequential fashion forming a multimeric L10(L12)X complex. One or more lysine residues are methylated.

Its function is as follows. Forms part of the ribosomal stalk which helps the ribosome interact with GTP-bound translation factors. This is Large ribosomal subunit protein uL11 from Azobacteroides pseudotrichonymphae genomovar. CFP2.